The following is a 315-amino-acid chain: Leukocidin-S subunit (315 aa).

An N-terminal signal peptide occupies residues 1–29 (MLKNKILATTLSVSLLAPLANPLLENAKA).

It belongs to the aerolysin family. In terms of assembly, leukocidin consists of two protein components: F and S.

Functionally, leukocidin causes cytotoxic changes in polymorphonuclear leukocytes. This chain is Leukocidin-S subunit (lukS), found in Staphylococcus aureus.